The primary structure comprises 598 residues: Elongation factor 4 (598 aa).

The 183-residue stretch at 4–186 folds into the tr-type G domain; it reads INIRNFAIIA…AIVSRLPAPS (183 aa). GTP is bound by residues 16 to 21 and 133 to 136; these read DHGKST and NKID.

This sequence belongs to the TRAFAC class translation factor GTPase superfamily. Classic translation factor GTPase family. LepA subfamily.

The protein resides in the cell inner membrane. It carries out the reaction GTP + H2O = GDP + phosphate + H(+). In terms of biological role, required for accurate and efficient protein synthesis under certain stress conditions. May act as a fidelity factor of the translation reaction, by catalyzing a one-codon backward translocation of tRNAs on improperly translocated ribosomes. Back-translocation proceeds from a post-translocation (POST) complex to a pre-translocation (PRE) complex, thus giving elongation factor G a second chance to translocate the tRNAs correctly. Binds to ribosomes in a GTP-dependent manner. The polypeptide is Elongation factor 4 (Ehrlichia ruminantium (strain Welgevonden)).